A 349-amino-acid chain; its full sequence is MKLAVVSVVVILGVLVAWPVSAGRKDLPGAGGYGGDDDDDTKSLFPLDNLLSLNYYDRICPDFEKIVVTKVREWTKSDSSLGPALLRLIFHDCGVTGCDASVLLDYEGTERRSPASKTLRGFELIDDIKSEMEKSCPGKVSCADILTSASRAATVQLGGPYWPNVYGRRDSKHSYARDVEKVPSGRRDVTALLETFQSYGLNVLDLVVLSGAHTIGKASCGTIQSRLYNYNATSGSDPSIDAKYADYLQRRCRWASETVDLDPVTPAVFDNQYYINLQKHMGVLSTDQELVKDPRTAPLVKTFAEQSPQIFRQQFAVSMAKLVNVGVLTGEDRVGEIRKVCSKSNSRAY.

Positions 1 to 22 (MKLAVVSVVVILGVLVAWPVSA) are cleaved as a signal peptide. 4 disulfides stabilise this stretch: Cys-60–Cys-136, Cys-93–Cys-98, Cys-142–Cys-341, and Cys-220–Cys-252. His-91 (proton acceptor) is an active-site residue. Asp-92, Val-95, Gly-97, Asp-99, and Ser-101 together coordinate Ca(2+). Pro-183 is a substrate binding site. His-213 serves as a coordination point for heme b. Thr-214 is a Ca(2+) binding site. N-linked (GlcNAc...) asparagine glycosylation is present at Asn-231. Ca(2+) contacts are provided by Asp-262, Thr-265, and Asp-270.

The protein belongs to the peroxidase family. Classical plant (class III) peroxidase subfamily. Heme b serves as cofactor. It depends on Ca(2+) as a cofactor.

The protein localises to the secreted. The enzyme catalyses 2 a phenolic donor + H2O2 = 2 a phenolic radical donor + 2 H2O. In terms of biological role, removal of H(2)O(2), oxidation of toxic reductants, biosynthesis and degradation of lignin, suberization, auxin catabolism, response to environmental stresses such as wounding, pathogen attack and oxidative stress. These functions might be dependent on each isozyme/isoform in each plant tissue. This Arabidopsis thaliana (Mouse-ear cress) protein is Peroxidase 7 (PER7).